Reading from the N-terminus, the 169-residue chain is uncharacterized protein (169 aa).

Asparagine 13, asparagine 29, asparagine 39, and asparagine 48 each carry an N-linked (GlcNAc...) asparagine; by host glycan. The Cell attachment site signature appears at 109–111 (RGD). Asparagine 135 carries N-linked (GlcNAc...) asparagine; by host glycosylation. A helical membrane pass occupies residues 145 to 165 (IYHMAIVYILIMYQIYILSLI).

The protein resides in the membrane. This is an uncharacterized protein from Acanthamoeba polyphaga (Amoeba).